Here is a 396-residue protein sequence, read N- to C-terminus: Acetate kinase (396 aa).

Residue Asn-7 coordinates Mg(2+). Residue Lys-14 coordinates ATP. Arg-91 serves as a coordination point for substrate. Catalysis depends on Asp-148, which acts as the Proton donor/acceptor. Residues His-208–Gly-212, Asp-283–Arg-285, and Gly-331–Asn-335 contribute to the ATP site. Glu-384 is a binding site for Mg(2+).

The protein belongs to the acetokinase family. In terms of assembly, homodimer. Mg(2+) serves as cofactor. The cofactor is Mn(2+).

The protein localises to the cytoplasm. The catalysed reaction is acetate + ATP = acetyl phosphate + ADP. It participates in metabolic intermediate biosynthesis; acetyl-CoA biosynthesis; acetyl-CoA from acetate: step 1/2. Its function is as follows. Catalyzes the formation of acetyl phosphate from acetate and ATP. Can also catalyze the reverse reaction. The polypeptide is Acetate kinase (Desulforamulus reducens (strain ATCC BAA-1160 / DSM 100696 / MI-1) (Desulfotomaculum reducens)).